Consider the following 171-residue polypeptide: Disulfide bond formation protein B (171 aa).

Over 1–8 (MRLSYRLV) the chain is Cytoplasmic. The helical transmembrane segment at 9–25 (SGLLVLASIVGMSFALY) threads the bilayer. The Periplasmic segment spans residues 26–43 (LEHVKGLEPCPLCIFQRV). Cysteines 35 and 38 form a disulfide. A helical membrane pass occupies residues 44–60 (GLMAMGFVALIAFLHNP). At 61–67 (VSNAIKR) the chain is on the cytoplasmic side. A helical transmembrane segment spans residues 68–85 (FYAFLAGVAILWSVGVAG). Topologically, residues 86–142 (RHVWLQHLPPDQVPSCGPGLNYLIDALPMKTVLQEVLSGSGECAAIDWTFLGQSLPV) are periplasmic. A disulfide bond links Cys101 and Cys128. The helical transmembrane segment at 143-161 (WSLAYFLLLLLVCLWQLFR) threads the bilayer. Over 162 to 171 (FYPVFKTAKK) the chain is Cytoplasmic.

It belongs to the DsbB family.

The protein resides in the cell inner membrane. Its function is as follows. Required for disulfide bond formation in some periplasmic proteins. Acts by oxidizing the DsbA protein. The sequence is that of Disulfide bond formation protein B from Acinetobacter baumannii (strain ATCC 17978 / DSM 105126 / CIP 53.77 / LMG 1025 / NCDC KC755 / 5377).